Reading from the N-terminus, the 422-residue chain is Phosphoglycerate kinase (422 aa).

Substrate-binding positions include Asp-24–Asn-26, His-64–Arg-67, Arg-129, and Arg-171. ATP-binding positions include Lys-222, Gly-309, Glu-340, and Asp-370–Thr-373.

The protein belongs to the phosphoglycerate kinase family. Monomer.

It localises to the cytoplasm. The catalysed reaction is (2R)-3-phosphoglycerate + ATP = (2R)-3-phospho-glyceroyl phosphate + ADP. It functions in the pathway carbohydrate degradation; glycolysis; pyruvate from D-glyceraldehyde 3-phosphate: step 2/5. The sequence is that of Phosphoglycerate kinase (pgk) from Ureaplasma parvum serovar 3 (strain ATCC 700970).